Reading from the N-terminus, the 196-residue chain is IVGKSYSCTDCGRSFYAKGHLLNHQKNHGGEKRFTCTECGKIFTRKSNLRKHQRIHTGDNLFTCTECGKRFTEKRNLLIHQRIHTGEKPFTCTECGKSFNLWSTLRNHHKIHTGEKPFTCPECGKKFSVKNSLRKHQRTHARKKLFTCTECGKTFTKKSTFHMHQSTHTGEKPFTCTECGKSFAKNGNLRIHQMTH.

7 C2H2-type zinc fingers span residues 6 to 28 (YSCT…QKNH), 34 to 56 (FTCT…QRIH), 62 to 84 (FTCT…QRIH), 90 to 112 (FTCT…HKIH), 118 to 140 (FTCP…QRTH), 146 to 168 (FTCT…QSTH), and 174 to 196 (FTCT…QMTH).

This sequence belongs to the krueppel C2H2-type zinc-finger protein family.

The protein localises to the nucleus. In terms of biological role, may be involved in transcriptional regulation. The chain is Oocyte zinc finger protein XlCOF26 from Xenopus laevis (African clawed frog).